Consider the following 611-residue polypeptide: Probable cysteine desulfurase 1 (611 aa).

The cargo-loading domain stretch occupies residues methionine 1–glutamine 208. Residue lysine 428 is modified to N6-(pyridoxal phosphate)lysine. Cysteine 566 (cysteine persulfide intermediate) is an active-site residue.

It belongs to the class-V pyridoxal-phosphate-dependent aminotransferase family. Csd subfamily. In terms of assembly, there are 1-2 copies of this protein in each type 2A encapsulin shell. Requires pyridoxal 5'-phosphate as cofactor.

The protein localises to the encapsulin nanocompartment. The catalysed reaction is (sulfur carrier)-H + L-cysteine = (sulfur carrier)-SH + L-alanine. Cargo protein of a type 2A encapsulin nanocompartment involved in sulfur metabolism. Cysteine desulfurases mobilize the sulfur from L-cysteine to yield L-alanine, an essential step in sulfur metabolism for biosynthesis of a variety of sulfur-containing biomolecules. The chain is Probable cysteine desulfurase 1 from Mycobacterium leprae (strain TN).